The chain runs to 106 residues: Small ribosomal subunit protein bS20 (106 aa).

Basic residues predominate over residues 1–20 (MATAKPKKKNPRLASGRKRV). The segment at 1–21 (MATAKPKKKNPRLASGRKRVR) is disordered.

It belongs to the bacterial ribosomal protein bS20 family.

Binds directly to 16S ribosomal RNA. This chain is Small ribosomal subunit protein bS20, found in Polaromonas naphthalenivorans (strain CJ2).